Here is a 243-residue protein sequence, read N- to C-terminus: tRNA (guanine-N(1)-)-methyltransferase (243 aa).

S-adenosyl-L-methionine is bound by residues glycine 108 and 127 to 132 (LGDFVL).

Belongs to the RNA methyltransferase TrmD family. Homodimer.

It is found in the cytoplasm. The catalysed reaction is guanosine(37) in tRNA + S-adenosyl-L-methionine = N(1)-methylguanosine(37) in tRNA + S-adenosyl-L-homocysteine + H(+). Specifically methylates guanosine-37 in various tRNAs. The protein is tRNA (guanine-N(1)-)-methyltransferase of Streptococcus equi subsp. equi (strain 4047).